Reading from the N-terminus, the 309-residue chain is uncharacterized protein (309 aa).

A helical membrane pass occupies residues 23–39 (RFNVAIIGGTGGLGRAI).

Belongs to the NmrA-type oxidoreductase family.

Its subcellular location is the membrane. This is an uncharacterized protein from Saccharomyces cerevisiae (strain ATCC 204508 / S288c) (Baker's yeast).